The chain runs to 343 residues: Multidrug resistance protein MdtN (343 aa).

Residues 1-12 (MESTPKKAPRSK) are Cytoplasmic-facing. The helical; Signal-anchor for type II membrane protein transmembrane segment at 13 to 33 (FPALLVVALALVALVFVIWRV) threads the bilayer. The Periplasmic portion of the chain corresponds to 34–343 (DSAPSTNDAY…ASAVANLEPQ (310 aa)).

It belongs to the membrane fusion protein (MFP) (TC 8.A.1) family. In terms of assembly, could be part of a tripartite efflux system composed of MdtN, MdtO and MdtP.

It localises to the cell inner membrane. Its function is as follows. Could be involved in resistance to puromycin, acriflavine and tetraphenylarsonium chloride. This is Multidrug resistance protein MdtN (mdtN) from Escherichia coli (strain K12).